A 237-amino-acid polypeptide reads, in one-letter code: MKITWLGHAAFRVETAKAVILIDPFLNGNPGAKGIDFKGATRGVTHIALTHGHGDHVGDTVAIAREHGATVIANADLASWLGSQGVEKLDPGNTGGTLAHEGFTITFVNALHSSAMLTENGVSQALGNPNGLVFHFEDSPTLYHMGDTDIFSDMALINELHQPEIGIVPIGDRFTMGGAVAALACQRYFNFNSVLPCHYASFPIIDRTADKFIAGMADHPATKVLADPAGTVHSFQA.

The protein belongs to the UPF0173 family.

This chain is UPF0173 metal-dependent hydrolase BCAN_B0597, found in Brucella canis (strain ATCC 23365 / NCTC 10854 / RM-666).